We begin with the raw amino-acid sequence, 534 residues long: Pentatricopeptide repeat-containing protein At5g08305 (534 aa).

PPR repeat units lie at residues 41 to 71 (PFVSQTLSFSALSSSGDVDYAYKFLSKLSDP), 72 to 106 (PNYGWNFVIRGFSNSRNPEKSISVYIQMLRFGLLP), 107 to 141 (DHMTYPFLMKSSSRLSNRKLGGSLHCSVVKSGLEW), 142 to 172 (DLFICNTLIHMYGSFRDQASARKLFDEMPHK), 173 to 203 (NLVTWNSILDAYAKSGDVVSARLVFDEMSER), 204 to 238 (DVVTWSSMIDGYVKRGEYNKALEIFDQMMRMGSSK), 240 to 274 (NEVTMVSVICACAHLGALNRGKTVHRYILDVHLPL), 275 to 305 (TVILQTSLIDMYAKCGSIGDAWSVFYRASVK), 308 to 342 (DALMWNAIIGGLASHGFIRESLQLFHKMRESKIDP), 343 to 377 (DEITFLCLLAACSHGGLVKEAWHFFKSLKESGAEP), and 378 to 408 (KSEHYACMVDVLSRAGLVKDAHDFISEMPIK). A type E motif region spans residues 413-488 (MLGALLNGCI…IAGHSILDLD (76 aa)). A type E(+) motif region spans residues 489-519 (GTRHRFIAHDKTHFHSDKIYAVLQLTGAWMN).

Belongs to the PPR family. PCMP-E subfamily.

In Arabidopsis thaliana (Mouse-ear cress), this protein is Pentatricopeptide repeat-containing protein At5g08305 (PCMP-E105).